A 172-amino-acid chain; its full sequence is Adenine phosphoribosyltransferase (172 aa).

It belongs to the purine/pyrimidine phosphoribosyltransferase family. As to quaternary structure, homodimer.

The protein localises to the cytoplasm. The enzyme catalyses AMP + diphosphate = 5-phospho-alpha-D-ribose 1-diphosphate + adenine. It functions in the pathway purine metabolism; AMP biosynthesis via salvage pathway; AMP from adenine: step 1/1. Functionally, catalyzes a salvage reaction resulting in the formation of AMP, that is energically less costly than de novo synthesis. This Prochlorococcus marinus (strain MIT 9303) protein is Adenine phosphoribosyltransferase.